The primary structure comprises 188 residues: Elongation factor P (188 aa).

It belongs to the elongation factor P family.

The protein resides in the cytoplasm. It participates in protein biosynthesis; polypeptide chain elongation. In terms of biological role, involved in peptide bond synthesis. Stimulates efficient translation and peptide-bond synthesis on native or reconstituted 70S ribosomes in vitro. Probably functions indirectly by altering the affinity of the ribosome for aminoacyl-tRNA, thus increasing their reactivity as acceptors for peptidyl transferase. This is Elongation factor P from Nitrobacter winogradskyi (strain ATCC 25391 / DSM 10237 / CIP 104748 / NCIMB 11846 / Nb-255).